The chain runs to 263 residues: Gap junction beta-6 protein (263 aa).

The Cytoplasmic portion of the chain corresponds to 1–19 (MDWGALQTILGGVNKHSTS). Residues 20–40 (IGKIWLTVLFIFRIMILVVAA) form a helical membrane-spanning segment. Over 41-75 (ERVWGDEQDDFICNTLQPGCKNVCYDHFFPISHIR) the chain is Extracellular. A helical membrane pass occupies residues 76–96 (LWALQLIFVSTPALLVAMHVA). The Cytoplasmic portion of the chain corresponds to 97 to 137 (YRRHEKKRQFRKGDQKCEYKDIEEIRTQRFRIEGTLWWTYT). Residues 138–158 (CSIFFRLVFEAVFMYAFYFMY) form a helical membrane-spanning segment. The Extracellular portion of the chain corresponds to 159-189 (DGFRMPRLMKCSAWPCPNTVDCFVSRPTEKT). The helical transmembrane segment at 190 to 210 (VFTIFMIAVSSICILLNVAEL) threads the bilayer. The Cytoplasmic segment spans residues 211–263 (CYLLTKFFLRRSRKAGNQKHHPNHENKEETKQNEMNELISDSCQNTVIGFTSS).

It belongs to the connexin family. Beta-type (group I) subfamily. As to quaternary structure, a connexon is composed of a hexamer of connexins. In terms of tissue distribution, exclusively expressed in the cochlea of the inner ear, where it is found in cells of the tegmentum vasculosum, cuboidal cells, supporting cells and clear cells.

Its subcellular location is the cell membrane. It localises to the cell junction. The protein localises to the gap junction. One gap junction consists of a cluster of closely packed pairs of transmembrane channels, the connexons, through which materials of low MW diffuse from one cell to a neighboring cell. The chain is Gap junction beta-6 protein (GJB6) from Gallus gallus (Chicken).